Reading from the N-terminus, the 437-residue chain is Glutamyl-tRNA reductase (437 aa).

Substrate-binding positions include Thr49–Arg52, Ser109, Glu114–Gln116, and Gln120. Cys50 (nucleophile) is an active-site residue. Gly198–Ser203 contacts NADP(+).

It belongs to the glutamyl-tRNA reductase family. As to quaternary structure, homodimer.

It carries out the reaction (S)-4-amino-5-oxopentanoate + tRNA(Glu) + NADP(+) = L-glutamyl-tRNA(Glu) + NADPH + H(+). The protein operates within porphyrin-containing compound metabolism; protoporphyrin-IX biosynthesis; 5-aminolevulinate from L-glutamyl-tRNA(Glu): step 1/2. It functions in the pathway porphyrin-containing compound metabolism; chlorophyll biosynthesis. Its function is as follows. Catalyzes the NADPH-dependent reduction of glutamyl-tRNA(Glu) to glutamate 1-semialdehyde (GSA). The chain is Glutamyl-tRNA reductase from Prochlorococcus marinus (strain SARG / CCMP1375 / SS120).